The primary structure comprises 283 residues: Acetylglutamate kinase (283 aa).

Substrate contacts are provided by residues 64 to 65 (GG), Arg-86, and Asn-181.

This sequence belongs to the acetylglutamate kinase family. ArgB subfamily.

The protein resides in the cytoplasm. It carries out the reaction N-acetyl-L-glutamate + ATP = N-acetyl-L-glutamyl 5-phosphate + ADP. It participates in amino-acid biosynthesis; L-arginine biosynthesis; N(2)-acetyl-L-ornithine from L-glutamate: step 2/4. Its function is as follows. Catalyzes the ATP-dependent phosphorylation of N-acetyl-L-glutamate. This is Acetylglutamate kinase from Sulfurovum sp. (strain NBC37-1).